A 709-amino-acid polypeptide reads, in one-letter code: MATTSLDLAKVRNIGIMAHIDAGKTTTTERILFYTGVSYKIGEVHDGAATMDWMEQEQERGITITSAATTCHWPLNDVDHTINIIDTPGHVDFTVEVERSLRVLDGAVTVFDGVAGVEPQSETVWRQADRYGVPRICFVNKLDRTGADFFRCVDMIVDRLGATPIVMQLPIGAEADFTGVVDLVSMKAFVYPEEAAKGEMYNVVDIPENLQESAAEWRGKLLEAVAENDDAMMELYLEGNEPTQEQLHDAIRRITLASKGSADSVTVTPVFCGTAFKNKGVQPLLDAVVRYLPSPLDVEAIEGHDVKDPEKVIARKPSDDEPFSGLAFKIASDPHLGKLTFVRIYSGRLEAGTAVLNSVKGKKERIGKIYRMHANKREEIASVGAGDIIAVMGLKQTTTGETLCDDKNPVILESMDFPAPVIQVAIEPKSKGDQEKLGVAIQRLSEEDPSFQVHSDEETGQTIIGGMGELHLEVLVDRMKREFRVEANVGKPQVAYRETIRKAVERIDYTHKKQTGGTGQFAKVQIALEPIEGGDASYEFVNKVTGGRIPREYIPSVDAGAQEAMQFGILAGYEMVGVRVTLLDGGYHEVDSSELAFKIAGSQAFKEGARKASPVLLEPMMAVEVTTPEDYMGDVIGDLNSRRGQIQAMEERSGARVVKGLVPLSEMFGYVGDLRSKTSGRASYSMQFDSYAEVPRNVAEEIIAKAKGE.

In terms of domain architecture, tr-type G spans 9 to 296 (AKVRNIGIMA…AVVRYLPSPL (288 aa)). GTP is bound by residues 18-25 (AHIDAGKT), 86-90 (DTPGH), and 140-143 (NKLD).

The protein belongs to the TRAFAC class translation factor GTPase superfamily. Classic translation factor GTPase family. EF-G/EF-2 subfamily.

The protein resides in the cytoplasm. Catalyzes the GTP-dependent ribosomal translocation step during translation elongation. During this step, the ribosome changes from the pre-translocational (PRE) to the post-translocational (POST) state as the newly formed A-site-bound peptidyl-tRNA and P-site-bound deacylated tRNA move to the P and E sites, respectively. Catalyzes the coordinated movement of the two tRNA molecules, the mRNA and conformational changes in the ribosome. This Streptomyces griseus subsp. griseus (strain JCM 4626 / CBS 651.72 / NBRC 13350 / KCC S-0626 / ISP 5235) protein is Elongation factor G.